Here is a 589-residue protein sequence, read N- to C-terminus: MASYRPPYPPLPQPPSQNSLAPPPPPPSLPPPVPPPPPSHQPYSYPPPPPPPPHAYYQQGPHYPQFNQLQAPPPPPPPSAPPPLVPDPPRHQGPNDHEKGASKQVGRRERAKPDPSKHHHRSHLPHSKKIETEEERRLRKKRELEKQRQDEKHRQQMKNSHKSQMPKGHTEEKKPTPLLTTDRVENRLKKPTTFICKLKFRNELPDPSAQLKLMTIKRDKDQFTKYTITSLEKLWKPKIFVEPDLGIPLDLLDLSVYNPPKVKAPLAPEDEELLRDDDAVTPIKKDGIRRKERPTDKGMSWLVKTQYISSINNESARQSLTEKQAKELREMKGGINILHNLNNRERQIKDIEASFEACKSRPVHATNKNLQPVEVLPLLPYFDRYDEQFVVANFDGAPIADSEFFGKLDPSIRDAHESRAILKSYVVAGSDTANPEKFLAYMVPSLDELSKDIHDENEEISYTWVREYLWDVQPNANDPGTYLVSFDNGTASYLPLPMRLNLRKKRAREGRSSDEIEHFPVPSRVTVRRRSTVSVIEHKDSGVYSSRVGASSSKMRRLEDEGGLGRSWKHEPEQDANQYSDGNEDDYSE.

Over residues 1-54 (MASYRPPYPPLPQPPSQNSLAPPPPPPSLPPPVPPPPPSHQPYSYPPPPPPPPH) the composition is skewed to pro residues. Disordered stretches follow at residues 1-180 (MASY…PLLT) and 542-589 (GVYS…DYSE). Residues 55–65 (AYYQQGPHYPQ) are compositionally biased toward low complexity. A compositionally biased stretch (pro residues) spans 71–87 (APPPPPPPSAPPPLVPD). The segment covering 88–116 (PPRHQGPNDHEKGASKQVGRRERAKPDPS) has biased composition (basic and acidic residues). Positions 117–127 (KHHHRSHLPHS) are enriched in basic residues. A coiled-coil region spans residues 126–159 (HSKKIETEEERRLRKKRELEKQRQDEKHRQQMKN). Residues 128 to 154 (KKIETEEERRLRKKRELEKQRQDEKHR) are compositionally biased toward basic and acidic residues.

Belongs to the PAF1 family. In terms of assembly, component of the nuclear PAF1 complex (PAF1C), which consists of VIP2/ELF7/PAF1, VIP3/SKI8/WDR61, VIP4/LEO1, VIP5/RTF1, VIP6/ELF8/CTR9 and CDC73. Expressed in roots, leaves and shoot apex.

It localises to the nucleus. Its function is as follows. Component of the PAF1 complex (PAF1C) which is involved in histone modifications such as methylation on histone H3 'Lys-4' (H3K4me3). Involved in regulation of flowering time. Required for the expression of the flowering repressors and MAD-box genes FLC, AGL27/FLM and AGL31/MAF2. Required for histone H3 trimethylation on 'Lys-4' H3K4me3 at the FLC and AGL27/FLM loci. Involved in the control of seed dormancy and germination. The protein is Protein PAF1 homolog of Arabidopsis thaliana (Mouse-ear cress).